Consider the following 131-residue polypeptide: Translation initiation factor 5A (131 aa).

K37 carries the hypusine modification.

Belongs to the eIF-5A family.

Its subcellular location is the cytoplasm. Its function is as follows. Functions by promoting the formation of the first peptide bond. In Methanococcus maripaludis (strain DSM 14266 / JCM 13030 / NBRC 101832 / S2 / LL), this protein is Translation initiation factor 5A.